Reading from the N-terminus, the 138-residue chain is Small ribosomal subunit protein uS12 (138 aa).

A disordered region spans residues 33 to 55 (KEHTNVSSPQKRGVCTRVGTMTP).

It belongs to the universal ribosomal protein uS12 family. As to quaternary structure, part of the 30S ribosomal subunit. Contacts proteins S8 and S17. May interact with IF1 in the 30S initiation complex. Interacts with BrxC.

Functionally, with S4 and S5 plays an important role in translational accuracy. In terms of biological role, interacts with and stabilizes bases of the 16S rRNA that are involved in tRNA selection in the A site and with the mRNA backbone. Located at the interface of the 30S and 50S subunits, it traverses the body of the 30S subunit contacting proteins on the other side and probably holding the rRNA structure together. The combined cluster of proteins S8, S12 and S17 appears to hold together the shoulder and platform of the 30S subunit. In Bacillus subtilis (strain 168), this protein is Small ribosomal subunit protein uS12 (rpsL).